The chain runs to 451 residues: Probable glycine dehydrogenase (decarboxylating) subunit 1 (451 aa).

Belongs to the GcvP family. N-terminal subunit subfamily. As to quaternary structure, the glycine cleavage system is composed of four proteins: P, T, L and H. In this organism, the P 'protein' is a heterodimer of two subunits.

It catalyses the reaction N(6)-[(R)-lipoyl]-L-lysyl-[glycine-cleavage complex H protein] + glycine + H(+) = N(6)-[(R)-S(8)-aminomethyldihydrolipoyl]-L-lysyl-[glycine-cleavage complex H protein] + CO2. Its function is as follows. The glycine cleavage system catalyzes the degradation of glycine. The P protein binds the alpha-amino group of glycine through its pyridoxal phosphate cofactor; CO(2) is released and the remaining methylamine moiety is then transferred to the lipoamide cofactor of the H protein. In Thermococcus kodakarensis (strain ATCC BAA-918 / JCM 12380 / KOD1) (Pyrococcus kodakaraensis (strain KOD1)), this protein is Probable glycine dehydrogenase (decarboxylating) subunit 1.